The primary structure comprises 91 residues: Large ribosomal subunit protein bL27 (91 aa).

Positions 1-10 are enriched in gly residues; sequence MAQKKGGGST. Residues 1-20 form a disordered region; that stretch reads MAQKKGGGSTRNGRDSQPKM.

This sequence belongs to the bacterial ribosomal protein bL27 family.

The chain is Large ribosomal subunit protein bL27 from Verminephrobacter eiseniae (strain EF01-2).